We begin with the raw amino-acid sequence, 441 residues long: MGEWVIGAFINIFGSVAINFGTNLLKLGHNERERLALQDGGGKMPLKPIIHNQTWRVGILVFLLGNCLNFISFGYAAQSLLAALGSIQFVSNIAFAYVVLNKMVTVKVLVATAFIVLGNVFLVAFGNHQSPVFTPEQLAEKYSNVTFLVYCGILILIVAVHHFLYRKGEVLISTPGQEISSYWKMLLPFSYAVVSGAIGSCSVLFAKSLSNLLRLAMSSSYQLHSWFTYSMLLLFLSTAGFWMTRLNEGLSLYDAILIVPMFQIAWTFFSICTGCIYFQEFQVFDALRTTMFILGMMCVFIGISLLAPDDTRGNETKDNSSSLDSIVSSSVPTEEDRLIPQSSEDGHSKDTRVVVQGMYMKAADLIAKTKTACLAALGFGEDSINASAILVMPMVSSKITGFRGNGLERAKILSMRGSGWSKLAMEEEGTRMLEKTISSKA.

Over 1 to 4 the chain is Extracellular; the sequence is MGEW. A helical transmembrane segment spans residues 5 to 25; it reads VIGAFINIFGSVAINFGTNLL. At 26-56 the chain is on the cytoplasmic side; it reads KLGHNERERLALQDGGGKMPLKPIIHNQTWR. Residues 57 to 77 form a helical membrane-spanning segment; the sequence is VGILVFLLGNCLNFISFGYAA. The Extracellular portion of the chain corresponds to 78 to 79; that stretch reads QS. The helical transmembrane segment at 80-100 threads the bilayer; that stretch reads LLAALGSIQFVSNIAFAYVVL. Residues 101–105 lie on the Cytoplasmic side of the membrane; it reads NKMVT. Residues 106–126 traverse the membrane as a helical segment; sequence VKVLVATAFIVLGNVFLVAFG. Residues 127–144 are Extracellular-facing; that stretch reads NHQSPVFTPEQLAEKYSN. The helical transmembrane segment at 145–165 threads the bilayer; it reads VTFLVYCGILILIVAVHHFLY. Residues 166–184 are Cytoplasmic-facing; that stretch reads RKGEVLISTPGQEISSYWK. The helical transmembrane segment at 185-205 threads the bilayer; the sequence is MLLPFSYAVVSGAIGSCSVLF. Over 206 to 222 the chain is Extracellular; it reads AKSLSNLLRLAMSSSYQ. A helical membrane pass occupies residues 223-243; that stretch reads LHSWFTYSMLLLFLSTAGFWM. The Cytoplasmic portion of the chain corresponds to 244–255; sequence TRLNEGLSLYDA. The chain crosses the membrane as a helical span at residues 256–276; sequence ILIVPMFQIAWTFFSICTGCI. The Extracellular segment spans residues 277–288; that stretch reads YFQEFQVFDALR. Residues 289–309 form a helical membrane-spanning segment; the sequence is TTMFILGMMCVFIGISLLAPD. The Cytoplasmic portion of the chain corresponds to 310-441; it reads DTRGNETKDN…MLEKTISSKA (132 aa). Residues 313 to 347 are disordered; the sequence is GNETKDNSSSLDSIVSSSVPTEEDRLIPQSSEDGH. Over residues 320-330 the composition is skewed to low complexity; that stretch reads SSSLDSIVSSS. The segment covering 334 to 347 has biased composition (basic and acidic residues); sequence EEDRLIPQSSEDGH.

Belongs to the NIPA (TC 2.A.7) family. Homodimer.

Its subcellular location is the cell membrane. The protein localises to the early endosome. In terms of biological role, acts as a Mg(2+) transporter. Can also transport other divalent cations such as Fe(2+), Sr(2+), Ba(2+), Mn(2+) and Co(2+) but to a much less extent than Mg(2+). The sequence is that of Probable magnesium transporter NIPA8 from Arabidopsis thaliana (Mouse-ear cress).